Consider the following 324-residue polypeptide: Lactonase drp35 (324 aa).

Glu47, Ser109, Gly111, Asp129, Thr132, Tyr134, Asp137, Asn184, Asp235, and Ser236 together coordinate Ca(2+). The active-site Proton donor is the Asp235.

It belongs to the SMP-30/CGR1 family. The cofactor is Ca(2+).

Its subcellular location is the cytoplasm. Its function is as follows. Exhibits lactonase activity. Acts in cells with perturbed membrane integrity and is possibly related to the membrane homeostasis. The sequence is that of Lactonase drp35 (drp35) from Staphylococcus aureus (strain bovine RF122 / ET3-1).